A 342-amino-acid polypeptide reads, in one-letter code: Alpha-(1,3)-fucosyltransferase 7 (342 aa).

Residues 1–14 (MNNAGHGPTRRLRG) lie on the Cytoplasmic side of the membrane. The chain crosses the membrane as a helical; Signal-anchor for type II membrane protein span at residues 15 to 36 (LGVLAGVALLAALWLLWLLGSA). At 37 to 342 (PRGTPAPQPT…YEDLEGWFQA (306 aa)) the chain is on the lumenal side. An intrachain disulfide couples cysteine 68 to cysteine 76. Residue asparagine 81 is glycosylated (N-linked (GlcNAc...) asparagine). Cysteine 211 and cysteine 214 are joined by a disulfide. The N-linked (GlcNAc...) asparagine glycan is linked to asparagine 291. Cysteine 318 and cysteine 321 are joined by a disulfide.

It belongs to the glycosyltransferase 10 family. N-glycosylated. In terms of tissue distribution, leukocytic/myeloid lineage cells.

Its subcellular location is the golgi apparatus. The protein localises to the golgi stack membrane. The enzyme catalyses an N-acetyl-alpha-neuraminyl-(2-&gt;3)-beta-D-galactosyl-(1-&gt;4)-N-acetyl-beta-D-glucosaminyl derivative + GDP-beta-L-fucose = an alpha-Neu5Ac-(2-&gt;3)-beta-D-Gal-(1-&gt;4)-[alpha-L-Fuc-(1-&gt;3)]-beta-D-GlcNAc derivative + GDP + H(+). The catalysed reaction is a neolactoside IV(3)-alpha-NeuAc-nLc4Cer + GDP-beta-L-fucose = a neolactoside IV(3)-alpha-NeuNAc,III(3)-alpha-Fuc-nLc4Cer + GDP + H(+). It carries out the reaction a neolactoside VI(3)-alpha-NeuNAc-nLc6Cer + GDP-beta-L-fucose = a neolactoside VI(3)-alpha-NeuAc,V(3)-alphaFuc-nLc6Cer + GDP + H(+). It catalyses the reaction an alpha-Neu5Ac-(2-&gt;3)-beta-D-Gal-(1-&gt;4)-beta-D-GlcNAc-(1-&gt;3)-beta-D-Gal-(1-&gt;4)-[alpha-L-Fuc-(1-&gt;3)]-beta-D-GlcNAc derivative + GDP-beta-L-fucose = an alpha-Neu5Ac-(2-&gt;3)-beta-D-Gal-(1-&gt;4)-[alpha-L-Fuc-(1-&gt;3)]-beta-D-GlcNAc-(1-&gt;3)-beta-D-Gal-(1-&gt;4)-[alpha-L-Fuc-(1-&gt;3)]-beta-D-GlcNAc derivative + GDP + H(+). The enzyme catalyses an alpha-Neu5Ac-(2-&gt;3)-beta-D-Gal-(1-&gt;4)-beta-D-GlcNAc6S derivative + GDP-beta-L-fucose = an alpha-Neu5Ac-(2-&gt;3)-beta-D-Gal-(1-&gt;4)-[alpha-L-Fuc-(1-&gt;3)]-beta-D-GlcNAc6S derivative + GDP + H(+). The catalysed reaction is alpha-Neu5Ac-(2-&gt;3)-beta-D-Gal-(1-&gt;4)-beta-D-GlcNAc-(1-&gt;3)-beta-D-Gal-(1-&gt;4)-D-Glc + GDP-beta-L-fucose = alpha-Neu5Ac-(2-&gt;3)-beta-D-Gal-(1-&gt;4)-[alpha-L-Fuc-(1-&gt;3)]-beta-D-GlcNAc-(1-&gt;3)-beta-D-Gal-(1-&gt;4)-D-Glc + GDP + H(+). It carries out the reaction alpha-Neu5Ac-(2-&gt;3)-beta-D-Gal-(1-&gt;4)-beta-D-GlcNAc-(1-&gt;3)-beta-D-Gal-(1-&gt;4)-[alpha-L-Fuc-(1-&gt;3)]-beta-D-GlcNAc-(1-&gt;3)-beta-D-Gal-(1-&gt;4)-beta-D-GlcNAc + GDP-beta-L-fucose = alpha-Neu5Ac-(2-&gt;3)-beta-D-Gal-(1-&gt;4)-[alpha-L-Fuc-(1-&gt;3)]-beta-D-GlcNAc-(1-&gt;3)-beta-D-Gal-(1-&gt;4)-[alpha-L-Fuc-(1-&gt;3)]-beta-D-GlcNAc-(1-&gt;3)-beta-D-Gal-(1-&gt;4)-beta-D-GlcNAc + GDP + H(+). It catalyses the reaction alpha-Neu5Ac-(2-&gt;3)-beta-D-Gal-(1-&gt;4)-beta-D-GlcNAc-(1-&gt;3)-beta-D-Gal-(1-&gt;4)-beta-D-GlcNAc-(1-&gt;3)-beta-D-Gal-(1-&gt;4)-beta-D-GlcNAc + GDP-beta-L-fucose = alpha-Neu5Ac-(2-&gt;3)-beta-D-Gal-(1-&gt;4)-[alpha-L-Fuc-(1-&gt;3)]-beta-D-GlcNAc-(1-&gt;3)-beta-D-Gal-(1-&gt;4)-beta-D-GlcNAc-(1-&gt;3)-beta-D-Gal-(1-&gt;4)-beta-D-GlcNAc + GDP + H(+). It participates in protein modification; protein glycosylation. Inhibited by NaCl. Inhibited by GDP in a concentration dependent manner, with an IC(50) value of 93 uM. Also inhibited by GMP and GTP. Inhibited by N-ethylmaleimide. Activated by poly(ethylene glycol) by enhancing the thermal stability of FUT7. Activated by Mn2+, Ca2+, and Mg2+. Both panosialin A and B inhibit activity with IC(50) values of 4.8 and 5.3 ug/ml, respectively. Inhibited by gallic acid (GA) and (-)-epigallocatechin gallate (EGCG) in a time-dependent and irreversible manner with IC(50) values of 60 and 700 nM, respectively. Functionally, catalyzes the transfer of L-fucose, from a guanosine diphosphate-beta-L-fucose, to the N-acetyl glucosamine (GlcNAc) of a distal alpha2,3 sialylated lactosamine unit of a glycoprotein or a glycolipid-linked sialopolylactosamines chain through an alpha-1,3 glycosidic linkage and participates in the final fucosylation step in the biosynthesis of the sialyl Lewis X (sLe(x)), a carbohydrate involved in cell and matrix adhesion during leukocyte trafficking and fertilization. In vitro, also synthesizes sialyl-dimeric-Lex structures, from VIM-2 structures and both di-fucosylated and trifucosylated structures from mono-fucosylated precursors. However does not catalyze alpha 1-3 fucosylation when an internal alpha 1-3 fucosylation is present in polylactosamine chain and the fucosylation rate of the internal GlcNAc residues is reduced once fucose has been added to the distal GlcNAc. Also catalyzes the transfer of a fucose from GDP-beta-fucose to the 6-sulfated a(2,3)sialylated substrate to produce 6-sulfo sLex mediating significant L-selectin-dependent cell adhesion. Through sialyl-Lewis(x) biosynthesis, can control SELE- and SELP-mediated cell adhesion with leukocytes and allows leukocytes tethering and rolling along the endothelial tissue thereby enabling the leukocytes to accumulate at a site of inflammation. May enhance embryo implantation through sialyl Lewis X (sLeX)-mediated adhesion of embryo cells to endometrium. May affect insulin signaling by up-regulating the phosphorylation and expression of some signaling molecules involved in the insulin-signaling pathway through SLe(x) which is present on the glycans of the INSRR alpha subunit. The chain is Alpha-(1,3)-fucosyltransferase 7 from Homo sapiens (Human).